A 549-amino-acid polypeptide reads, in one-letter code: Cytoplasmic trehalase (549 aa).

Residues arginine 168, tryptophan 175–aspartate 176, asparagine 212, arginine 221–glutamine 223, arginine 292–glutamate 294, and glycine 324 contribute to the substrate site. Active-site proton donor/acceptor residues include aspartate 326 and glutamate 509. Glutamate 525 lines the substrate pocket.

It belongs to the glycosyl hydrolase 37 family. In terms of assembly, monomer.

It localises to the cytoplasm. It catalyses the reaction alpha,alpha-trehalose + H2O = alpha-D-glucose + beta-D-glucose. It functions in the pathway glycan degradation; trehalose degradation; D-glucose from alpha,alpha-trehalose: step 1/1. In terms of biological role, hydrolyzes trehalose to glucose. Could be involved, in cells returning to low osmolarity conditions, in the utilization of the accumulated cytoplasmic trehalose, which was synthesized in response to high osmolarity. This Escherichia coli O81 (strain ED1a) protein is Cytoplasmic trehalase.